A 362-amino-acid polypeptide reads, in one-letter code: EARP-interacting protein 1 (362 aa).

WD repeat units follow at residues 61-108 (HPAG…RTLE), 206-246 (AHIH…SALT), 250-290 (PHAH…SEQQ), and 319-359 (EHED…KYAL).

Belongs to the WD repeat EIPR1 family. In terms of tissue distribution, expressed in the hypodermis and the pharynx.

It localises to the cytoplasm. Plays a role in the trafficking of cargo to dense-core vesicles, probably through association with the endosome-associated recycling protein (EARP) complex. Important for neuronal function. The protein is EARP-interacting protein 1 of Caenorhabditis elegans.